A 389-amino-acid polypeptide reads, in one-letter code: Large envelope protein (389 aa).

Met1 bears the N-acetylmethionine mark. Gly2 carries the N-myristoyl glycine; by host lipid modification. Residues Gly2–Ala108 form a pre-S1 region. The interval Gly2 to Asn163 is pre-S. Residues Gly2–Gly170 are Virion surface; in external conformation-facing. Topologically, residues Gly2 to Arg242 are intravirion; in internal conformation. Residues Leu77–Leu101 are disordered. A compositionally biased stretch (polar residues) spans Ser85–Thr95. The pre-S2 stretch occupies residues Met109–Asn163. Residues Leu171–Ile191 form a helical membrane-spanning segment. At Pro192–Arg242 the chain is on the intravirion; in external conformation side. The chain crosses the membrane as a helical span at residues Phe243 to Tyr263. Residues Gln264–Ser337 lie on the Virion surface side of the membrane. Asn309 is a glycosylation site (N-linked (GlcNAc...) asparagine; by host). A helical membrane pass occupies residues Leu338–Ile358. The Intravirion portion of the chain corresponds to Trp359–Trp364. Residues Gly365–Val387 traverse the membrane as a helical segment. Residues Tyr388–Ile389 are Virion surface-facing.

Belongs to the orthohepadnavirus major surface antigen family. In terms of assembly, in its internal form (Li-HBsAg), interacts with the capsid protein and with the isoform S. Interacts with host chaperone CANX. Associates with host chaperone CANX through its pre-S2 N glycan; this association may be essential for isoform M proper secretion. As to quaternary structure, interacts with isoform L. Interacts with the antigens of satellite virus HDV (HDVAgs); this interaction is required for encapsidation of HDV genomic RNA. In terms of processing, isoform M is N-terminally acetylated by host at a ratio of 90%, and N-glycosylated by host at the pre-S2 region. Post-translationally, myristoylated.

The protein localises to the virion membrane. The large envelope protein exists in two topological conformations, one which is termed 'external' or Le-HBsAg and the other 'internal' or Li-HBsAg. In its external conformation the protein attaches the virus to cell receptors and thereby initiating infection. This interaction determines the species specificity and liver tropism. This attachment induces virion internalization predominantly through caveolin-mediated endocytosis. The large envelope protein also assures fusion between virion membrane and endosomal membrane. In its internal conformation the protein plays a role in virion morphogenesis and mediates the contact with the nucleocapsid like a matrix protein. In terms of biological role, the middle envelope protein plays an important role in the budding of the virion. It is involved in the induction of budding in a nucleocapsid independent way. In this process the majority of envelope proteins bud to form subviral lipoprotein particles of 22 nm of diameter that do not contain a nucleocapsid. This Hepatitis B virus genotype D (isolate Germany/1-91/1991) (HBV-D) protein is Large envelope protein.